An 82-amino-acid polypeptide reads, in one-letter code: RNA-binding protein Hfq (82 aa).

In terms of domain architecture, Sm spans 11-71; that stretch reads DTFLNSVRKS…ISTIMPAQPV (61 aa).

Belongs to the Hfq family. Homohexamer.

RNA chaperone that binds small regulatory RNA (sRNAs) and mRNAs to facilitate mRNA translational regulation in response to envelope stress, environmental stress and changes in metabolite concentrations. Also binds with high specificity to tRNAs. This Caulobacter sp. (strain K31) protein is RNA-binding protein Hfq.